Reading from the N-terminus, the 159-residue chain is Small ribosomal subunit protein uS9 (159 aa).

The protein belongs to the universal ribosomal protein uS9 family.

The sequence is that of Small ribosomal subunit protein uS9 from Rickettsia massiliae (strain Mtu5).